The sequence spans 396 residues: Ribosomal RNA large subunit methyltransferase I (396 aa).

Positions 2 to 79 (SVRLVLAKGR…QAESIDIAFF (78 aa)) constitute a PUA domain.

It belongs to the methyltransferase superfamily. RlmI family.

It localises to the cytoplasm. It carries out the reaction cytidine(1962) in 23S rRNA + S-adenosyl-L-methionine = 5-methylcytidine(1962) in 23S rRNA + S-adenosyl-L-homocysteine + H(+). Specifically methylates the cytosine at position 1962 (m5C1962) of 23S rRNA. In Citrobacter koseri (strain ATCC BAA-895 / CDC 4225-83 / SGSC4696), this protein is Ribosomal RNA large subunit methyltransferase I.